We begin with the raw amino-acid sequence, 612 residues long: UBA domain-containing protein 6 (612 aa).

Positions 3-42 constitute a UBA domain; sequence DLDTKIKTLKNMGVSESDAKDSLERCGYDVESAAEFIFSG. Phosphoserine is present on serine 595.

Its subcellular location is the cytoplasm. It localises to the nucleus. The protein is UBA domain-containing protein 6 (ucp6) of Schizosaccharomyces pombe (strain 972 / ATCC 24843) (Fission yeast).